The following is a 164-amino-acid chain: Protein-export protein SecB (164 aa).

Belongs to the SecB family. As to quaternary structure, homotetramer, a dimer of dimers. One homotetramer interacts with 1 SecA dimer.

The protein resides in the cytoplasm. Its function is as follows. One of the proteins required for the normal export of preproteins out of the cell cytoplasm. It is a molecular chaperone that binds to a subset of precursor proteins, maintaining them in a translocation-competent state. It also specifically binds to its receptor SecA. The polypeptide is Protein-export protein SecB (Chromohalobacter salexigens (strain ATCC BAA-138 / DSM 3043 / CIP 106854 / NCIMB 13768 / 1H11)).